The primary structure comprises 120 residues: Large ribosomal subunit protein bL20 (120 aa).

It belongs to the bacterial ribosomal protein bL20 family.

In terms of biological role, binds directly to 23S ribosomal RNA and is necessary for the in vitro assembly process of the 50S ribosomal subunit. It is not involved in the protein synthesizing functions of that subunit. The polypeptide is Large ribosomal subunit protein bL20 (Ureaplasma parvum serovar 3 (strain ATCC 27815 / 27 / NCTC 11736)).